Consider the following 127-residue polypeptide: MIRNALLVLVFVLIGTISAATDADMTTDSGKQPSNINQLTLVSPEGKRLLRQGSVKEGGVHDATEERAFIVTPLKNSLYRILAAFGLKPQTLYVQLGIRTGMANALYNRLYHSYHRWYATYGPRVYG.

The first 19 residues, 1–19 (MIRNALLVLVFVLIGTISA), serve as a signal peptide directing secretion. Residues 48–67 (RLLRQGSVKEGGVHDATEER) carry the RxLR-dEER motif.

This sequence belongs to the RxLR effector family.

It is found in the secreted. The protein resides in the host cell. Functionally, effector that is involved in host plant infection. Contributes to virulence during the early infection stage, by inhibiting plant defense responses induced by both PAMP-triggered immunity (PTI) and effector-triggered immunity (ETI). The sequence is that of RxLR effector protein CRE6 from Phytophthora infestans (strain T30-4) (Potato late blight agent).